The primary structure comprises 335 residues: Holliday junction branch migration complex subunit RuvB (335 aa).

A large ATPase domain (RuvB-L) region spans residues 4 to 184 (ADRIISTSAK…FGIVQRLEFY (181 aa)). ATP-binding positions include I23, R24, G65, K68, T69, T70, 131–133 (EDY), R174, Y184, and R221. A Mg(2+)-binding site is contributed by T69. The interval 185–255 (AVEDLTSIVA…SAKAALLMLD (71 aa)) is small ATPAse domain (RuvB-S). Positions 258–335 (DAGFDYLDRK…RYFGLEKLTE (78 aa)) are head domain (RuvB-H). Residues R294, R313, and R318 each coordinate DNA.

Belongs to the RuvB family. Homohexamer. Forms an RuvA(8)-RuvB(12)-Holliday junction (HJ) complex. HJ DNA is sandwiched between 2 RuvA tetramers; dsDNA enters through RuvA and exits via RuvB. An RuvB hexamer assembles on each DNA strand where it exits the tetramer. Each RuvB hexamer is contacted by two RuvA subunits (via domain III) on 2 adjacent RuvB subunits; this complex drives branch migration. In the full resolvosome a probable DNA-RuvA(4)-RuvB(12)-RuvC(2) complex forms which resolves the HJ.

It localises to the cytoplasm. It carries out the reaction ATP + H2O = ADP + phosphate + H(+). Functionally, the RuvA-RuvB-RuvC complex processes Holliday junction (HJ) DNA during genetic recombination and DNA repair, while the RuvA-RuvB complex plays an important role in the rescue of blocked DNA replication forks via replication fork reversal (RFR). RuvA specifically binds to HJ cruciform DNA, conferring on it an open structure. The RuvB hexamer acts as an ATP-dependent pump, pulling dsDNA into and through the RuvAB complex. RuvB forms 2 homohexamers on either side of HJ DNA bound by 1 or 2 RuvA tetramers; 4 subunits per hexamer contact DNA at a time. Coordinated motions by a converter formed by DNA-disengaged RuvB subunits stimulates ATP hydrolysis and nucleotide exchange. Immobilization of the converter enables RuvB to convert the ATP-contained energy into a lever motion, pulling 2 nucleotides of DNA out of the RuvA tetramer per ATP hydrolyzed, thus driving DNA branch migration. The RuvB motors rotate together with the DNA substrate, which together with the progressing nucleotide cycle form the mechanistic basis for DNA recombination by continuous HJ branch migration. Branch migration allows RuvC to scan DNA until it finds its consensus sequence, where it cleaves and resolves cruciform DNA. In Pasteurella multocida (strain Pm70), this protein is Holliday junction branch migration complex subunit RuvB.